Reading from the N-terminus, the 163-residue chain is HTH-type transcriptional regulator IscR (163 aa).

Residues 2-131 enclose the HTH rrf2-type domain; that stretch reads RLTSKGRYAV…NNITLGELVN (130 aa). Residues 28-51 constitute a DNA-binding region (H-T-H motif); the sequence is LADISERQGISLSYLEQLFSRLRK. Cysteine 92, cysteine 98, and cysteine 104 together coordinate [2Fe-2S] cluster.

Requires [2Fe-2S] cluster as cofactor.

Regulates the transcription of several operons and genes involved in the biogenesis of Fe-S clusters and Fe-S-containing proteins. The protein is HTH-type transcriptional regulator IscR of Enterobacter sp. (strain 638).